A 522-amino-acid chain; its full sequence is Glutathione reductase, mitochondrial (522 aa).

The N-terminal 43 residues, 1-43, are a transit peptide targeting the mitochondrion; the sequence is MALLPRALSAGAGPSWRRAARAFRGFLLLLPEPAALTRALSRA. Residues S74 and G75 each contribute to the FAD site. S74 contributes to the glutathione binding site. R81 provides a ligand contact to glutathione. Residue E94 coordinates FAD. K97 is subject to N6-acetyllysine. The FAD site is built by T101, C102, and K110. C102 and C107 form a disulfide bridge. Glutathione is bound at residue Y158. A174 contributes to the FAD binding site. A239, I242, E245, R262, R268, and G334 together coordinate NADP(+). Residue D375 participates in FAD binding. L381 is an NADP(+) binding site. FAD is bound at residue T383. R391 provides a ligand contact to glutathione. V414 is an NADP(+) binding site. H511 contributes to the FAD binding site. The active-site Proton acceptor is the H511.

It belongs to the class-I pyridine nucleotide-disulfide oxidoreductase family. As to quaternary structure, homodimer; disulfide-linked. FAD serves as cofactor.

The protein resides in the mitochondrion. It is found in the cytoplasm. The catalysed reaction is 2 glutathione + NADP(+) = glutathione disulfide + NADPH + H(+). In terms of biological role, catalyzes the reduction of glutathione disulfide (GSSG) to reduced glutathione (GSH). Constitutes the major mechanism to maintain a high GSH:GSSG ratio in the cytosol. The protein is Glutathione reductase, mitochondrial (GSR) of Homo sapiens (Human).